Consider the following 55-residue polypeptide: MAKGIREKIKLESTAGTGHFYTTSKNKRTTPEKLEFNKYDPVARKHVPYKEVKLK.

The protein belongs to the bacterial ribosomal protein bL33 family.

The sequence is that of Large ribosomal subunit protein bL33 from Azoarcus sp. (strain BH72).